The primary structure comprises 33 residues: GLLDSLKGFAATAGKGVLQSLLSTASCKLAKTC.

An intrachain disulfide couples Cys27 to Cys33.

It belongs to the frog skin active peptide (FSAP) family. Brevinin subfamily. In terms of tissue distribution, expressed by the skin glands.

Its subcellular location is the secreted. Functionally, shows antibacterial activity against representative Gram-negative and Gram-positive bacterial species, and a very high hemolytic activity. The polypeptide is Brevinin-2 (Pelophylax porosus brevipodus (Nagoya Daruma pond frog)).